The following is a 325-amino-acid chain: Bifunctional nuclease 1 (325 aa).

Positions 117–252 constitute a BFN domain; sequence CVHNNPQGGH…YLAYSDGMRV (136 aa). A UVR domain is found at 284-318; that stretch reads TKEFNILSKMMQAVDEERYDEAAEWRDKLGQFRAK.

It belongs to the bifunctional nuclease family.

Its subcellular location is the nucleus. In terms of biological role, bifunctional nuclease with both RNase and DNase activities. Involved in basal defense response. Participates in abscisic acid-derived callose deposition following infection by a necrotrophic pathogen. The protein is Bifunctional nuclease 1 (BBD1) of Arabidopsis thaliana (Mouse-ear cress).